The following is a 182-amino-acid chain: Large ribosomal subunit protein uL16 (182 aa).

The protein belongs to the universal ribosomal protein uL16 family.

In Thermococcus gammatolerans (strain DSM 15229 / JCM 11827 / EJ3), this protein is Large ribosomal subunit protein uL16.